The following is a 186-amino-acid chain: Large ribosomal subunit protein uL5c (186 aa).

It belongs to the universal ribosomal protein uL5 family. As to quaternary structure, part of the 50S ribosomal subunit; contacts the 5S rRNA.

It localises to the plastid. The protein resides in the chloroplast. Its function is as follows. Binds 5S rRNA, forms part of the central protuberance of the 50S subunit. In Chaetosphaeridium globosum (Charophycean green alga), this protein is Large ribosomal subunit protein uL5c (rpl5).